The sequence spans 247 residues: MyoD family inhibitor domain-containing protein (247 aa).

Disordered stretches follow at residues 1-67 and 80-110; these read MSCA…NPSA and QLQTSAQEPGKEETGKIKNGGHTRMSNGNGI. Residues 74-247 enclose the MDFI domain; it reads QPERLPQLQT…MECCGICFPS (174 aa). A phosphoserine mark is found at serine 129 and serine 141.

This sequence belongs to the MDFI family. Interacts with HAND1; the interaction sequesters Hand1 into the nucleolus and inhibits its activity. Interacts (via C-terminus) with ZIC2. Interacts (via C-terminus) with AXIN1, the histidine-rich region of CCNT1/cyclin-T and weakly with LEF1. Interacts with CCNT2. Interacts with GATA2. Interacts (via C-terminus) with Piezo channel composed of PIEZO1 or PIEZO2; the interaction prolongs Piezo channel inactivation. Palmitoylated. In the embryo, robust expression is detected between 16.5 and 18.5 dpc in lung, kidney, and salivary glands. In the developing cardiovascular system, it is detected in lymphatic and cardiac valves (at protein level).

The protein localises to the cytoplasm. It is found in the secreted. Its function is as follows. Required to control the activity of various transcription factors through their sequestration in the cytoplasm. Retains nuclear Zic proteins ZIC1, ZIC2 and ZIC3 in the cytoplasm and inhibits their transcriptional activation. Modulates the expression from cellular promoters. Binds to the axin complex, resulting in an increase in the level of free beta-catenin. Affects axin-regulation of the WNT and JNK signaling pathways. Involved in the development of lymphatic vessel valves. Required to promote lymphatic endothelial cell migration, in a process that involves down-regulation of integrin beta 1 activation and control of cell adhesion to the extracellular matrix. Regulates the activity of mechanosensitive Piezo channel. The protein is MyoD family inhibitor domain-containing protein of Mus musculus (Mouse).